Here is a 563-residue protein sequence, read N- to C-terminus: Sulfite reductase [NADPH] hemoprotein beta-component (563 aa).

[4Fe-4S] cluster contacts are provided by C426, C432, C472, and C476. Siroheme is bound at residue C476.

This sequence belongs to the nitrite and sulfite reductase 4Fe-4S domain family. In terms of assembly, alpha(8)-beta(8). The alpha component is a flavoprotein, the beta component is a hemoprotein. It depends on siroheme as a cofactor. [4Fe-4S] cluster serves as cofactor.

The enzyme catalyses hydrogen sulfide + 3 NADP(+) + 3 H2O = sulfite + 3 NADPH + 4 H(+). It functions in the pathway sulfur metabolism; hydrogen sulfide biosynthesis; hydrogen sulfide from sulfite (NADPH route): step 1/1. In terms of biological role, component of the sulfite reductase complex that catalyzes the 6-electron reduction of sulfite to sulfide. This is one of several activities required for the biosynthesis of L-cysteine from sulfate. The sequence is that of Sulfite reductase [NADPH] hemoprotein beta-component from Photobacterium profundum (strain SS9).